The following is a 371-amino-acid chain: Polygalacturonase (371 aa).

The signal sequence occupies residues 1–19 (MPSYLRNLVWATLAAGLVS). A propeptide spanning residues 20 to 34 (AAPTPSRVSDLTKKS) is cleaved from the precursor. C38 and C53 are disulfide-bonded. PbH1 repeat units lie at residues 95-117 (GPLIKISGSDITVEAADGAVINA), 165-195 (SDNLIIDGVTIDNSDGDENGGHNTDGFDISE), 196-217 (STGVTIRNAVVKNQDDCIAINS), 218-238 (GQNIYFTGGTCSGGHGLSIGS), 247-268 (VKNVTITDSTVTDSANGVRIKT), 276-298 (VSDVTFSDITVSGITDYGIVIEQ), and 310-355 (TSGV…DITS). The Proton donor role is filled by D210. A disulfide bridge connects residues C212 and C228. Residue H232 is part of the active site. An N-linked (GlcNAc...) asparagine glycan is attached at N249. Intrachain disulfides connect C338-C343 and C362-C371.

The protein belongs to the glycosyl hydrolase 28 family.

It is found in the secreted. It carries out the reaction (1,4-alpha-D-galacturonosyl)n+m + H2O = (1,4-alpha-D-galacturonosyl)n + (1,4-alpha-D-galacturonosyl)m.. In Penicillium janthinellum (Penicillium vitale), this protein is Polygalacturonase.